The following is a 302-amino-acid chain: MDQKRLTHLRQLETESIHIIREVAAEFANPVMLYSIGKDSSVMLHLARKAFYPGTLPFPLLHVDTGWKFREMYAFRDRTANAYGCELLVHKNPEGVAMGINPFVHGSAKHTDIMKTEGLKQALNKYGFDAAFGGARRDEEKSRAKERIYSFRDRFHRWDPKNQRPELWRNYNGQINKGESIRVFPLSNWTEQDIWQYIWLENIDIVPLYLAAERPVLERDGMLMMVDDDRIDLQPGEVIKKRMVRFRTLGCWPLTGAVESHAQTLPEIIEEMLVSTTSERQGRMIDRDQAGSMELKKRQGYF.

This sequence belongs to the PAPS reductase family. CysD subfamily. In terms of assembly, heterodimer composed of CysD, the smaller subunit, and CysN.

The catalysed reaction is sulfate + ATP + H(+) = adenosine 5'-phosphosulfate + diphosphate. It functions in the pathway sulfur metabolism; hydrogen sulfide biosynthesis; sulfite from sulfate: step 1/3. With CysN forms the ATP sulfurylase (ATPS) that catalyzes the adenylation of sulfate producing adenosine 5'-phosphosulfate (APS) and diphosphate, the first enzymatic step in sulfur assimilation pathway. APS synthesis involves the formation of a high-energy phosphoric-sulfuric acid anhydride bond driven by GTP hydrolysis by CysN coupled to ATP hydrolysis by CysD. The sequence is that of Sulfate adenylyltransferase subunit 2 from Salmonella paratyphi A (strain AKU_12601).